Consider the following 162-residue polypeptide: Probable chemoreceptor glutamine deamidase CheD (162 aa).

The protein belongs to the CheD family.

It catalyses the reaction L-glutaminyl-[protein] + H2O = L-glutamyl-[protein] + NH4(+). Functionally, probably deamidates glutamine residues to glutamate on methyl-accepting chemotaxis receptors (MCPs), playing an important role in chemotaxis. The sequence is that of Probable chemoreceptor glutamine deamidase CheD from Syntrophotalea carbinolica (strain DSM 2380 / NBRC 103641 / GraBd1) (Pelobacter carbinolicus).